The primary structure comprises 87 residues: Putative regulatory protein ABC2323 (87 aa).

The protein belongs to the RemA family.

The protein is Putative regulatory protein ABC2323 of Shouchella clausii (strain KSM-K16) (Alkalihalobacillus clausii).